The following is an 875-amino-acid chain: Leucine--tRNA ligase (875 aa).

The span at 1–20 (MPSAGSVNAANPAVDTSAQT) shows a compositional bias: polar residues. The disordered stretch occupies residues 1–22 (MPSAGSVNAANPAVDTSAQTGR). The 'HIGH' region motif lies at 60–70 (PYPSGSLHMGH). Positions 634–638 (KMSKS) match the 'KMSKS' region motif. K637 contacts ATP.

The protein belongs to the class-I aminoacyl-tRNA synthetase family.

It localises to the cytoplasm. The catalysed reaction is tRNA(Leu) + L-leucine + ATP = L-leucyl-tRNA(Leu) + AMP + diphosphate. This Synechococcus sp. (strain CC9605) protein is Leucine--tRNA ligase.